The primary structure comprises 293 residues: tRNA pseudouridine synthase B (293 aa).

Catalysis depends on Asp-38, which acts as the Nucleophile.

Belongs to the pseudouridine synthase TruB family. Type 1 subfamily.

The enzyme catalyses uridine(55) in tRNA = pseudouridine(55) in tRNA. Functionally, responsible for synthesis of pseudouridine from uracil-55 in the psi GC loop of transfer RNAs. This is tRNA pseudouridine synthase B from Solibacter usitatus (strain Ellin6076).